The chain runs to 408 residues: MALVNGNYLKLKAGYLFPEIGRRVKAFSEANPDAALIRLGIGDVTEPLPQACRDAMKNAIDEMGTREGFHGYGPEQGYAWLREAIAKHDFQSRGCDISAEEIFVSDGSKCDSSNILDILGEGNRIAVTDPVYPVYVDSNVMAGRTGDANEGGQYGGLSYLPITAANDFTAPLPSTPVDLIYLCFPNNPTGAVASREQLKSWVDYALEHKALILFDAAYEAFIQDPAIPHSIFEIEGARQCAIEFRSFSKNAGFTGTRCALTVVPKGLMGTSATGEQVELWGLWNRRQSTKFNGVSYIVQRGAEAVYSEQGQAEVKALINFYMENAAIIRRELSAAGLTIYGGEHAPYVWIKTPEGMDSWGFFDHLLNRANVVGTPGSGFGAAGEGYFRLSAFNSRSNVDEAMRRIRAL.

Residues Tyr15 and Gly42 each contribute to the substrate site. Residues Tyr72, 108–109 (SK), Tyr132, Asn187, Tyr218, and 246–248 (SFS) each bind pyridoxal 5'-phosphate. Positions 109, 132, and 187 each coordinate substrate. At Lys249 the chain carries N6-(pyridoxal phosphate)lysine. 2 residues coordinate pyridoxal 5'-phosphate: Arg257 and Asn292. Asn292 and Arg388 together coordinate substrate.

It belongs to the class-I pyridoxal-phosphate-dependent aminotransferase family. LL-diaminopimelate aminotransferase subfamily. As to quaternary structure, homodimer. It depends on pyridoxal 5'-phosphate as a cofactor.

It carries out the reaction (2S,6S)-2,6-diaminopimelate + 2-oxoglutarate = (S)-2,3,4,5-tetrahydrodipicolinate + L-glutamate + H2O + H(+). It functions in the pathway amino-acid biosynthesis; L-lysine biosynthesis via DAP pathway; LL-2,6-diaminopimelate from (S)-tetrahydrodipicolinate (aminotransferase route): step 1/1. Involved in the synthesis of meso-diaminopimelate (m-DAP or DL-DAP), required for both lysine and peptidoglycan biosynthesis. Catalyzes the direct conversion of tetrahydrodipicolinate to LL-diaminopimelate. The protein is LL-diaminopimelate aminotransferase of Synechococcus sp. (strain RCC307).